A 351-amino-acid polypeptide reads, in one-letter code: Porphobilinogen deaminase (351 aa).

Cys242 is subject to S-(dipyrrolylmethanemethyl)cysteine.

The protein belongs to the HMBS family. As to quaternary structure, monomer. The cofactor is dipyrromethane.

It catalyses the reaction 4 porphobilinogen + H2O = hydroxymethylbilane + 4 NH4(+). It functions in the pathway porphyrin-containing compound metabolism; protoporphyrin-IX biosynthesis; coproporphyrinogen-III from 5-aminolevulinate: step 2/4. Its function is as follows. Tetrapolymerization of the monopyrrole PBG into the hydroxymethylbilane pre-uroporphyrinogen in several discrete steps. The chain is Porphobilinogen deaminase from Rickettsia rickettsii (strain Sheila Smith).